The sequence spans 65 residues: Large ribosomal subunit protein uL30 (65 aa).

It belongs to the universal ribosomal protein uL30 family. As to quaternary structure, part of the 50S ribosomal subunit.

This chain is Large ribosomal subunit protein uL30, found in Mesorhizobium japonicum (strain LMG 29417 / CECT 9101 / MAFF 303099) (Mesorhizobium loti (strain MAFF 303099)).